Reading from the N-terminus, the 705-residue chain is Probable glutamate carboxypeptidase AMP1 (705 aa).

Residues 1-24 (MSQPLTTRPTVTGISIIPFRQPPP) lie on the Cytoplasmic side of the membrane. A helical; Signal-anchor for type II membrane protein membrane pass occupies residues 25 to 42 (LCSFLFVIVLFVATFYTL). Over 43–705 (HHPDAVTPPL…ASKALKGGFT (663 aa)) the chain is Extracellular. Residues Asn-74, Asn-137, and Asn-322 are each glycosylated (N-linked (GlcNAc...) asparagine). Residues 255 to 548 (GVVGGEKLSL…GIWGLLGILL (294 aa)) form a catalytic region. 2 residues coordinate Zn(2+): His-356 and Asp-366. The active-site Nucleophile is the Glu-403. Zn(2+) contacts are provided by Glu-404, Asp-432, and His-514. A glycan (N-linked (GlcNAc...) asparagine) is linked at Asn-676.

This sequence belongs to the peptidase M28 family. M28B subfamily. Zn(2+) is required as a cofactor. In terms of tissue distribution, expressed in all plant parts. Highest levels in the bolt stem, inflorescence, root and silique. Low level in leaves.

The protein localises to the endoplasmic reticulum membrane. It carries out the reaction Release of an unsubstituted, C-terminal glutamyl residue, typically from Ac-Asp-Glu or folylpoly-gamma-glutamates.. Functionally, may modulate the level of one or more small signaling molecules that have a role in regulating meristem function. May play a role in balancing and restricting the meristem-promoting activity of auxin signaling. Involved in ethylene and giberellin (GA) signaling pathways or in a parallel pathway controlling cell and hypocotyl elongation and cellular organization. Involved in abscisic acid (ABA) signaling pathway. Plays a negative role in ABA-mediated seed germination and seedling development. Acts in association with LAMP1 to suppress ectopic stem cell niche formation in the shoot apical meristem (SAM) independently of cytokinin signaling pathway. Modulates responses to ABA, oxidative stress and abotic stress. Acts as a negative regulator of the ABA signaling pathway to modulate freezing and drought stress responses. Mediates carbon and amino acid metabolism. May be involved in the acquisition and/or maintenance of seed dormancy. Involved in the regulation of response to heat shock and plant defense. In Arabidopsis thaliana (Mouse-ear cress), this protein is Probable glutamate carboxypeptidase AMP1.